The chain runs to 146 residues: VHLTAEEKAAVTALWGKVNVDEVGGEALGRLLVVYPWTQRFFDSFGDLSSPDAVMGNPKVKAHGKKVLNSFSEGLKNLDNLKGTFAKLSELHCDKLHVDPENFKLLGNVLVCVLAHHFGKEFTPQVQAAYQKVVAGVANALAHKYH.

The residue at position 1 (V1) is an N-acetylvaline. Positions 2-146 (HLTAEEKAAV…VANALAHKYH (145 aa)) constitute a Globin domain. Position 12 is a phosphothreonine (T12). S44 carries the phosphoserine modification. K59 carries the post-translational modification N6-acetyllysine. H63 serves as a coordination point for heme b. The residue at position 82 (K82) is an N6-acetyllysine. Residue H92 participates in heme b binding. At C93 the chain carries S-nitrosocysteine. Position 144 is an N6-acetyllysine (K144).

Belongs to the globin family. In terms of assembly, heterotetramer of two alpha chains and two beta chains. Red blood cells.

Functionally, involved in oxygen transport from the lung to the various peripheral tissues. The protein is Hemoglobin subunit beta (HBB) of Mellivora capensis (Ratel).